The sequence spans 809 residues: WD repeat protein iqw1 (809 aa).

5 WD repeats span residues 43-82 (GHTGCVNTLDWSADGEFLLSGSDDTRLIVWDVFNEYKPRH), 87-128 (GHVQ…EGGM), 141-180 (CALDSVKNIVPCDNGHTFLVCSEDGTARQYDIREPHVCNQ), 193-233 (PYRI…KSFR), and 241-295 (SPEK…LFHV). The tract at residues 599–644 (SMYTGHSDLNDDDDDYQDEESYSYASDDDDESDEDSDEGPTLLSLR) is disordered. The span at 608 to 636 (NDDDDDYQDEESYSYASDDDDESDEDSDE) shows a compositional bias: acidic residues. 2 WD repeats span residues 668-708 (CNVE…ILAI) and 711-750 (GDSEAVNVIEGHPRCPTLAVSGIDSTVKIFNTENTPPSGC).

In terms of assembly, interacts with ddb1.

It is found in the cytoplasm. Functionally, ligand-dependent coactivator of nuclear receptors that may function as a substrate receptor for CUL4-DDB1 E3 ubiquitin-protein ligase complex. This Schizosaccharomyces pombe (strain 972 / ATCC 24843) (Fission yeast) protein is WD repeat protein iqw1 (iqw1).